The primary structure comprises 247 residues: uncharacterized protein (247 aa).

Alanine 4–valine 28 is a binding site for NADP(+). A substrate-binding site is contributed by serine 142. The active-site Proton acceptor is the tyrosine 156.

The protein belongs to the short-chain dehydrogenases/reductases (SDR) family.

This is an uncharacterized protein from Escherichia coli (strain K12).